Here is an 86-residue protein sequence, read N- to C-terminus: MKVSVLITLAVLGVMFVWASAAELEERGSDHRDSPAWLKSMERIFQSEERECRKMFGGCSVHSDCCAHLGCKPTLKYCAWDGTFGK.

An N-terminal signal peptide occupies residues 1 to 21 (MKVSVLITLAVLGVMFVWASA). The propeptide occupies 22–50 (AELEERGSDHRDSPAWLKSMERIFQSEER). Disulfide bonds link cysteine 52-cysteine 66, cysteine 59-cysteine 71, and cysteine 65-cysteine 78.

Belongs to the neurotoxin 10 (Hwtx-1) family. 28 (Jztx-11) subfamily. In terms of tissue distribution, expressed by the venom gland.

Its subcellular location is the secreted. Probable ion channel inhibitor. The chain is Kappa-theraphotoxin-Cg1c from Chilobrachys guangxiensis (Chinese earth tiger tarantula).